The primary structure comprises 385 residues: Lipoyl synthase, mitochondrial (385 aa).

Positions 107, 112, 118, 137, 141, 144, and 352 each coordinate [4Fe-4S] cluster. In terms of domain architecture, Radical SAM core spans 122–341 (KKSEATATIM…RDTALKMGFL (220 aa)).

This sequence belongs to the radical SAM superfamily. Lipoyl synthase family. It depends on [4Fe-4S] cluster as a cofactor.

Its subcellular location is the mitochondrion. The catalysed reaction is [[Fe-S] cluster scaffold protein carrying a second [4Fe-4S](2+) cluster] + N(6)-octanoyl-L-lysyl-[protein] + 2 oxidized [2Fe-2S]-[ferredoxin] + 2 S-adenosyl-L-methionine + 4 H(+) = [[Fe-S] cluster scaffold protein] + N(6)-[(R)-dihydrolipoyl]-L-lysyl-[protein] + 4 Fe(3+) + 2 hydrogen sulfide + 2 5'-deoxyadenosine + 2 L-methionine + 2 reduced [2Fe-2S]-[ferredoxin]. It participates in protein modification; protein lipoylation via endogenous pathway; protein N(6)-(lipoyl)lysine from octanoyl-[acyl-carrier-protein]: step 2/2. In terms of biological role, catalyzes the radical-mediated insertion of two sulfur atoms into the C-6 and C-8 positions of the octanoyl moiety bound to the lipoyl domains of lipoate-dependent enzymes, thereby converting the octanoylated domains into lipoylated derivatives. This Meyerozyma guilliermondii (strain ATCC 6260 / CBS 566 / DSM 6381 / JCM 1539 / NBRC 10279 / NRRL Y-324) (Yeast) protein is Lipoyl synthase, mitochondrial.